We begin with the raw amino-acid sequence, 177 residues long: Large ribosomal subunit protein uL6 (177 aa).

This sequence belongs to the universal ribosomal protein uL6 family. In terms of assembly, part of the 50S ribosomal subunit.

This protein binds to the 23S rRNA, and is important in its secondary structure. It is located near the subunit interface in the base of the L7/L12 stalk, and near the tRNA binding site of the peptidyltransferase center. This chain is Large ribosomal subunit protein uL6, found in Rickettsia felis (strain ATCC VR-1525 / URRWXCal2) (Rickettsia azadi).